A 513-amino-acid chain; its full sequence is MKSVNHLVLTPGSLSLAQLREISRHKLTLELAPEAINDINISAQIVQKVLDEGRTVYGINTGFGLLANTKIAPEDLQLLQRSIVLSHAAGTGQYMQDATVRLMMVLKINSLSRGFSGIRLEVINFLISLVNAEVYPCVPEKGSVGASGDLAPLAHMCLPLLGEGEMSYQGQIISAAEGLEIAGLKPIDLAAKEGLALLNGTQASTALALEGLFHAEDLFAASSVIGAMSVEAAMGSRSPFDPRIHAARGQKGQIDSAMVFRYLLGEESEISLSHANCEKVQDPYSLRCQPQVLGACLTQIRQAAEVLATEANGVTDNPLVFQDTGDIISGGNFHAEPVAMAADNLAIAIAELGAIAERRIALLIDSSLSKLPPFLVKNGGVNSGFMIAQVTAAALASENKTYAHPASVDSLPTSANQEDHVSMATFAARRLRDMSENTRGVLAIELLAAAQGLDFRAPLTPSKAVAQAKAELREVVAYYDKDRYFAPDIEAATDLLYTASFNAYLPLGVLPSL.

A cross-link (5-imidazolinone (Ala-Gly)) is located at residues 146-148 (ASG). S147 is subject to 2,3-didehydroalanine (Ser).

This sequence belongs to the PAL/histidase family. Contains an active site 4-methylidene-imidazol-5-one (MIO), which is formed autocatalytically by cyclization and dehydration of residues Ala-Ser-Gly.

It localises to the cytoplasm. It catalyses the reaction L-histidine = trans-urocanate + NH4(+). The protein operates within amino-acid degradation; L-histidine degradation into L-glutamate; N-formimidoyl-L-glutamate from L-histidine: step 1/3. The sequence is that of Histidine ammonia-lyase from Shewanella oneidensis (strain ATCC 700550 / JCM 31522 / CIP 106686 / LMG 19005 / NCIMB 14063 / MR-1).